A 258-amino-acid polypeptide reads, in one-letter code: uncharacterized protein (258 aa).

It belongs to the IIV-6 219L family.

This is an uncharacterized protein from Aedes vexans (Inland floodwater mosquito).